The sequence spans 502 residues: Cyclin-dependent kinase 19 (502 aa).

M1 bears the N-acetylmethionine mark. A Protein kinase domain is found at 21-335; sequence EYEGCKVGRG…SEQALQDPYF (315 aa). ATP contacts are provided by residues 27–35 and K52; that span reads VGRGTYGHV. D151 (proton acceptor) is an active-site residue. The disordered stretch occupies residues 359–502; the sequence is LNEDDPEEKG…YHPSHQAHRY (144 aa). Residues 371–392 show a composition bias toward low complexity; the sequence is NQQQQQNQHQQPTAPPQQAAAP. Gly residues predominate over residues 408 to 421; it reads TAGGAGAGVGGTGA. Positions 424 to 435 are enriched in polar residues; it reads QHSQDSSLNQVP. S449 bears the Phosphoserine mark. Residues 458 to 467 are compositionally biased toward polar residues; it reads YQHSSSRLNY. Residues 468–496 are compositionally biased toward low complexity; the sequence is QSSVQGSSQSQSTLGYSSSSQQSSQYHPS.

The protein belongs to the protein kinase superfamily. CMGC Ser/Thr protein kinase family. CDC2/CDKX subfamily.

It is found in the cytoplasm. The protein resides in the perinuclear region. Its subcellular location is the nucleus. The catalysed reaction is L-seryl-[protein] + ATP = O-phospho-L-seryl-[protein] + ADP + H(+). It carries out the reaction L-threonyl-[protein] + ATP = O-phospho-L-threonyl-[protein] + ADP + H(+). The protein is Cyclin-dependent kinase 19 (CDK19) of Homo sapiens (Human).